The primary structure comprises 947 residues: Leucine-rich repeat-containing protein 37B (947 aa).

The first 27 residues, 1-27, serve as a signal peptide directing secretion; it reads MSWLRFWGPWPLLTWQLLSLLVKEAQP. The Extracellular segment spans residues 28–905; the sequence is LVWVKDPLQL…EVPGDDYKNK (878 aa). Disordered regions lie at residues 42 to 88, 226 to 257, 294 to 458, and 484 to 514; these read LGPP…ALPQ, YLSM…QVGL, EVEP…PEPT, and SLTE…EQKA. A compositionally biased stretch (polar residues) spans 311–320; the sequence is SMESLAQTPL. An N-linked (GlcNAc...) asparagine glycan is attached at N358. Composition is skewed to polar residues over residues 404-415, 436-445, and 495-507; these read GQAQHSHLTEAT, SPTTEETSAQ, and LESS…QSET. LRR repeat units lie at residues 556 to 577, 580 to 601, 604 to 625, 628 to 649, 655 to 676, and 679 to 699; these read IFTT…VWKA, WTEK…SFEG, YLQY…TFES, FLQY…TFQA, FLHN…YLFE, and ALKY…KNIL. N-linked (GlcNAc...) asparagine glycosylation occurs at N789. The stretch at 867 to 897 forms a coiled coil; the sequence is DTDQQKTNYINENMEQNEQKEQKSSELMKEV. A helical membrane pass occupies residues 906–926; it reads LIFAISVTVILIILIIIFCLI. Topologically, residues 927–947 are cytoplasmic; the sequence is EVNSHKRASEKYKDNPSISGA.

It is found in the membrane. This chain is Leucine-rich repeat-containing protein 37B (LRRC37B), found in Homo sapiens (Human).